The chain runs to 260 residues: 14-3-3 protein 4 (260 aa).

The tract at residues 238–260 (DNADDVGDDIKEASKPESGEGQQ) is disordered. Over residues 245–260 (DDIKEASKPESGEGQQ) the composition is skewed to basic and acidic residues.

The protein belongs to the 14-3-3 family. As to quaternary structure, homodimer.

The protein is 14-3-3 protein 4 (TFT4) of Solanum lycopersicum (Tomato).